The chain runs to 245 residues: Ribosomal RNA small subunit methyltransferase G (245 aa).

S-adenosyl-L-methionine is bound by residues glycine 79, phenylalanine 84, 130-131 (AE), and arginine 150.

It belongs to the methyltransferase superfamily. RNA methyltransferase RsmG family.

The protein resides in the cytoplasm. Specifically methylates the N7 position of a guanine in 16S rRNA. The chain is Ribosomal RNA small subunit methyltransferase G from Limosilactobacillus fermentum (strain NBRC 3956 / LMG 18251) (Lactobacillus fermentum).